The following is a 294-amino-acid chain: Tetraspanin-15 (294 aa).

Over 1–23 the chain is Cytoplasmic; the sequence is MPRGDSEQVRYCARFSYLWLKFS. A helical transmembrane segment spans residues 24 to 44; it reads LIIYSTVFWLIGALVLSVGIY. The Extracellular portion of the chain corresponds to 45–62; it reads AEVERQKYKTLESAFLAP. Residues 63–83 traverse the membrane as a helical segment; sequence AIILILLGVVMFMVSFIGVLA. Over 84-93 the chain is Cytoplasmic; the sequence is SLRDNLYLLQ. Residues 94-114 form a helical membrane-spanning segment; sequence AFMYILGICLIMELIGGVVAL. Residues 115–235 lie on the Extracellular side of the membrane; sequence TFRNQTIDFL…WFMDNYTIMA (121 aa). N-linked (GlcNAc...) asparagine glycosylation occurs at Asn-118. 4 cysteine pairs are disulfide-bonded: Cys-154-Cys-219, Cys-155-Cys-185, Cys-171-Cys-179, and Cys-186-Cys-198. Residues Asn-189 and Asn-230 are each glycosylated (N-linked (GlcNAc...) asparagine). The chain crosses the membrane as a helical span at residues 236–256; it reads GILLGILLPQFLGVLLTLLYI. Residues 257-294 lie on the Cytoplasmic side of the membrane; the sequence is TRVEDIIMEHSVTDGLLGPGAKPSVEAAGTGCCLCYPN.

It belongs to the tetraspanin (TM4SF) family. Interacts with ADAM10; the interaction influences ADAM10 substrate specificity, endocytosis and turnover. Post-translationally, palmitoylated.

Its subcellular location is the cell membrane. It localises to the late endosome membrane. In terms of biological role, part of TspanC8 subgroup, composed of 6 members that interact with the transmembrane metalloprotease ADAM10. This interaction is required for ADAM10 exit from the endoplasmic reticulum and for enzymatic maturation and trafficking to the cell surface as well as substrate specificity. Different TspanC8/ADAM10 complexes have distinct substrates. Promotes ADAM10-mediated cleavage of CDH2. Negatively regulates ligand-induced Notch activity probably by regulating ADAM10 activity. The chain is Tetraspanin-15 from Homo sapiens (Human).